The primary structure comprises 880 residues: MKKMGLNEIRKLFLDFYEEKEHYVQSSYPLVPHNDKSLLLINAGMAPLKNYFSGVETPPSKRMATCQKCIRTGDIENVGKTSRHATFFEMLGSFAFGDYFKTESIQWGWEFATKYLEMPEDKIWASVYEEDDEAYGIWENQIKMPKERIVRLGKEDNFWEIGVGPCGPCSELYFDRGDKYSCGHDDCKPGCDCDRFVEFWNHVFTQFDKDEAGNYNLLPNPNIDTGMGLERVACIMQDVDSIFEVDTMKHILNSVCTATNTQYNKDVKTNISLRIITDHLRSITFMIGDGILPSNEGRGYVLRRLLRRAARHGKLLGVSKSFLYELMDTVTETYGGAYSELVEKKDYIKKIIQVEEDRFQETIHQGLEILNQHIEEMIGKSENMLNGTYAFKLYDTYGFPLDLTKEILEEREMTVDESEFESEMEKQRNRARKARSGGDTEGWKEDAFDALDKNIQTSFKGYETLRAEGKVLAIIEENQSVNLTSAGKEVVIVLDKTPFYPESGGQIGDIGHIFKDEFEGQVLDTKQGKNQRIHQYIKILRGILQVGDSIQGEVDKEPRHNTERNHTATHLLHKALKGIIGEHVEQAGSLVTPEKLRFDFSHFEGLSSADLSKVELEVNQEILNALNVDTVEASLEEAKKMGAMALFGEKYGDDVRVVKTGDYSVELCGGTHVKNSSEIGTFLILSETGVAAGVRRIEAVTGQEAYHHIKREQGLIQDIESLLKTKGEQLTKRVEELLKETKEKDKELQQLKSKLANQSIDEILNQIEVIEGTNLLVHHFGEQSMEDLRNIGDSLKQKIGSGVIALGAESNDKASFFVTATKDVVEKGVHSGNMIREVAKIAGGGGGGRPDMAQAGGKNPEKIQSALSIVKGLLKNQLNG.

Residues Thr414–Trp443 form a disordered region. Zn(2+) is bound by residues His566, His570, Cys668, and His672.

Belongs to the class-II aminoacyl-tRNA synthetase family. The cofactor is Zn(2+).

It is found in the cytoplasm. The catalysed reaction is tRNA(Ala) + L-alanine + ATP = L-alanyl-tRNA(Ala) + AMP + diphosphate. Functionally, catalyzes the attachment of alanine to tRNA(Ala) in a two-step reaction: alanine is first activated by ATP to form Ala-AMP and then transferred to the acceptor end of tRNA(Ala). Also edits incorrectly charged Ser-tRNA(Ala) and Gly-tRNA(Ala) via its editing domain. This chain is Alanine--tRNA ligase, found in Alkaliphilus metalliredigens (strain QYMF).